Reading from the N-terminus, the 455-residue chain is Differentiation-associated protein 1 (455 aa).

The N-terminal stretch at 1 to 21 (MKFKLFLLVFFVFLLPYLSQS) is a signal peptide. Positions 349 to 434 (IGSSSSSSSS…SDDDLGNPSS (86 aa)) are disordered. Residues 351–423 (SSSSSSSSSS…KSNHTSSESS (73 aa)) are compositionally biased toward low complexity. The GPI-like-anchor amidated serine moiety is linked to residue Ser-433. The propeptide at 434-455 (SSSILSVSKLIILLISIILYCF) is removed in mature form.

It localises to the cell membrane. Functionally, plays a role in differentiation. In Dictyostelium discoideum (Social amoeba), this protein is Differentiation-associated protein 1 (dia1).